Consider the following 416-residue polypeptide: Choline/ethanolaminephosphotransferase 1 (416 aa).

The disordered stretch occupies residues 1-20; the sequence is MSGHRSTRKRCGDSHPESPV. Residue serine 18 is modified to Phosphoserine. Position 40 is a phosphothreonine (threonine 40). Asparagine 86 serves as a coordination point for CDP-choline. The next 2 helical transmembrane spans lie at 89 to 108 and 116 to 133; these read TIIG…FYCP and LWAY…QSLD. A Mg(2+)-binding site is contributed by aspartate 133. Asparagine 144 is a glycosylation site (N-linked (GlcNAc...) asparagine). Glutamate 151 contributes to the CDP-choline binding site. Residue aspartate 154 participates in Mg(2+) binding. The active-site Proton acceptor is histidine 155. The next 8 membrane-spanning stretches (helical) occupy residues 156–176, 180–199, 210–230, 246–267, 286–306, 315–334, 349–363, and 368–388; these read GCDS…VQLG, DWMF…AHWQ, IIDV…AVIG, MKLL…NYFR, VLSP…IYKK, HPCL…TNKL, TAFI…DQYF, and DEYI…IRYC. Residue aspartate 158 coordinates Mg(2+).

This sequence belongs to the CDP-alcohol phosphatidyltransferase class-I family. Homodimer. It depends on Mg(2+) as a cofactor. Mn(2+) is required as a cofactor.

The protein resides in the endoplasmic reticulum membrane. The protein localises to the nucleus membrane. It catalyses the reaction CDP-ethanolamine + a 1,2-diacyl-sn-glycerol = a 1,2-diacyl-sn-glycero-3-phosphoethanolamine + CMP + H(+). It carries out the reaction CDP-choline + a 1,2-diacyl-sn-glycerol = a 1,2-diacyl-sn-glycero-3-phosphocholine + CMP + H(+). The catalysed reaction is 1-O-alkyl-2-acyl-sn-glycerol + CDP-choline = a 1-O-alkyl-2-acyl-sn-glycero-3-phosphocholine + CMP + H(+). The enzyme catalyses a 1-O-(1Z-alkenyl)-2-acyl-sn-glycerol + CDP-choline = a 1-O-(1Z-alkenyl)-2-acyl-sn-glycero-3-phosphocholine + CMP + H(+). It catalyses the reaction 1,2-dioctanoyl-sn-glycerol + CDP-choline = 1,2-dioctanoyl-sn-glycero-3-phosphocholine + CMP + H(+). It carries out the reaction 1,2-didecanoyl-sn-glycerol + CDP-choline = 1,2-didecanoyl-sn-glycero-3-phosphocholine + CMP + H(+). The catalysed reaction is CDP-choline + 1,2-di-(9Z-octadecenoyl)-sn-glycerol = 1,2-di-(9Z-octadecenoyl)-sn-glycero-3-phosphocholine + CMP + H(+). The enzyme catalyses 1-hexadecanoyl-2-(9Z-octadecenoyl)-sn-glycerol + CDP-choline = 1-hexadecanoyl-2-(9Z-octadecenoyl)-sn-glycero-3-phosphocholine + CMP + H(+). It catalyses the reaction CDP-ethanolamine + 1,2-di-(9Z-octadecenoyl)-sn-glycerol = 1,2-di-(9Z-octadecenoyl)-sn-glycero-3-phosphoethanolamine + CMP + H(+). It carries out the reaction 1-hexadecanoyl-2-(9Z-octadecenoyl)-sn-glycerol + CDP-ethanolamine = 1-hexadecanoyl-2-(9Z-octadecenoyl)-sn-glycero-3-phosphoethanolamine + CMP + H(+). The catalysed reaction is 1-hexadecanoyl-2-(4Z,7Z,10Z,13Z,16Z,19Z-docosahexaenoyl)-sn-glycerol + CDP-choline = 1-hexadecanoyl-2-(4Z,7Z,10Z,13Z,16Z,19Z-docosahexaenoyl)-sn-glycero-3-phosphocholine + CMP + H(+). The enzyme catalyses 1,2-di-(9Z-hexadecenoyl)-sn-glycerol + CDP-choline = 1,2-di-(9Z-hexadecenoyl)-sn-glycero-3-phosphocholine + CMP + H(+). It catalyses the reaction 1,2-di-(9Z-hexadecenoyl)-sn-glycerol + CDP-ethanolamine = 1,2-di-(9Z-hexadecenoyl)-sn-glycero-3-phosphoethanolamine + CMP + H(+). It carries out the reaction 1-O-hexadecyl-2-acetyl-sn-glycerol + CDP-choline = 1-O-hexadecyl-2-acetyl-sn-glycero-3-phosphocholine + CMP + H(+). The catalysed reaction is 1-O-hexadecyl-2-(5Z,8Z,11Z,14Z-eicosatetraenoyl)-sn-glycerol + CDP-choline = 1-O-hexadecyl-2-(5Z,8Z,11Z,14Z)-eicosatetraenoyl-sn-glycero-3-phosphocholine + CMP + H(+). It functions in the pathway phospholipid metabolism; phosphatidylethanolamine biosynthesis; phosphatidylethanolamine from ethanolamine: step 3/3. It participates in phospholipid metabolism; phosphatidylcholine biosynthesis; phosphatidylcholine from phosphocholine: step 2/2. In terms of biological role, catalyzes both phosphatidylcholine and phosphatidylethanolamine biosynthesis from CDP-choline and CDP-ethanolamine, respectively. Involved in protein-dependent process of phospholipid transport to distribute phosphatidyl choline to the lumenal surface. Has a higher cholinephosphotransferase activity than ethanolaminephosphotransferase activity. This is Choline/ethanolaminephosphotransferase 1 from Mus musculus (Mouse).